Here is a 61-residue protein sequence, read N- to C-terminus: Acetylcholinesterase toxin C (61 aa).

Intrachain disulfides connect cysteine 3/cysteine 22, cysteine 17/cysteine 39, cysteine 41/cysteine 52, and cysteine 53/cysteine 59.

This sequence belongs to the three-finger toxin family. Short-chain subfamily. Acn-esterase inhibitor sub-subfamily. As to expression, expressed by the venom gland.

Its subcellular location is the secreted. Inhibits acetylcholinesterase. The sequence is that of Acetylcholinesterase toxin C from Dendroaspis polylepis polylepis (Black mamba).